Here is a 308-residue protein sequence, read N- to C-terminus: Ribosomal RNA small subunit methyltransferase H (308 aa).

Residues 36–38, D55, F82, D103, and Q110 each bind S-adenosyl-L-methionine; that span reads GGH.

It belongs to the methyltransferase superfamily. RsmH family.

The protein localises to the cytoplasm. It catalyses the reaction cytidine(1402) in 16S rRNA + S-adenosyl-L-methionine = N(4)-methylcytidine(1402) in 16S rRNA + S-adenosyl-L-homocysteine + H(+). Specifically methylates the N4 position of cytidine in position 1402 (C1402) of 16S rRNA. The polypeptide is Ribosomal RNA small subunit methyltransferase H (Helicobacter pylori (strain J99 / ATCC 700824) (Campylobacter pylori J99)).